The primary structure comprises 267 residues: MALEFPVIDPIIFSVGPLSVRWYGLMYLIGFAFAMWFANRQAAKPNSGWTKDQVGDFLFYGMLGVILGGRIGYVLFYQFSYFIENPLYLFRIDQGGMSFHGGTLGVITAVVIFAWTRKKSILQVGDFVAPLVPVGLLAGRIGNFINGELWGRVSDVPWAMVFPTGGPLARHPSQLYEAFFEGLVLFLILQWFIKKPRPAGSVAGVFLLGYGTFRFCIEYFRQPDAQLGLFADFISMGQILSLPMIVGGLGLLIWAYKQATQKTAVKG.

The next 3 helical transmembrane spans lie at 18–38, 57–77, and 95–115; these read LSVR…MWFA, FLFY…VLFY, and GGMS…IFAW. Arginine 140 serves as a coordination point for a 1,2-diacyl-sn-glycero-3-phospho-(1'-sn-glycerol). 3 helical membrane passes run 173–193, 200–220, and 233–253; these read SQLY…QWFI, GSVA…IEYF, and FISM…GLLI.

The protein belongs to the Lgt family.

It is found in the cell inner membrane. The catalysed reaction is L-cysteinyl-[prolipoprotein] + a 1,2-diacyl-sn-glycero-3-phospho-(1'-sn-glycerol) = an S-1,2-diacyl-sn-glyceryl-L-cysteinyl-[prolipoprotein] + sn-glycerol 1-phosphate + H(+). Its pathway is protein modification; lipoprotein biosynthesis (diacylglyceryl transfer). Functionally, catalyzes the transfer of the diacylglyceryl group from phosphatidylglycerol to the sulfhydryl group of the N-terminal cysteine of a prolipoprotein, the first step in the formation of mature lipoproteins. This is Phosphatidylglycerol--prolipoprotein diacylglyceryl transferase from Pseudoalteromonas translucida (strain TAC 125).